A 311-amino-acid polypeptide reads, in one-letter code: Ribosomal RNA large subunit methyltransferase F (311 aa).

The protein belongs to the methyltransferase superfamily. METTL16/RlmF family.

The protein localises to the cytoplasm. The enzyme catalyses adenosine(1618) in 23S rRNA + S-adenosyl-L-methionine = N(6)-methyladenosine(1618) in 23S rRNA + S-adenosyl-L-homocysteine + H(+). In terms of biological role, specifically methylates the adenine in position 1618 of 23S rRNA. In Pectobacterium carotovorum subsp. carotovorum (strain PC1), this protein is Ribosomal RNA large subunit methyltransferase F.